A 469-amino-acid chain; its full sequence is Zinc transporter SLC39A7 (469 aa).

A helical membrane pass occupies residues Trp-10–Gly-30. Composition is skewed to basic and acidic residues over residues Phe-42 to His-56 and His-66 to His-114. Residues Phe-42–Gly-121 are disordered. The residue at position 66 (His-66) is a Pros-methylhistidine. The next 3 membrane-spanning stretches (helical) occupy residues Ala-138–Val-158, Leu-169–Ile-189, and Gly-214–Glu-234. Positions Gly-242–His-263 are enriched in basic residues. Residues Gly-242–Lys-310 are disordered. Positions Gly-264–Gly-285 are enriched in basic and acidic residues. A phosphoserine; by CK2 mark is found at Ser-275 and Ser-276. Helical transmembrane passes span Met-381–Thr-401 and Gly-417–Leu-436.

This sequence belongs to the ZIP transporter (TC 2.A.5) family. KE4/Catsup subfamily. As to quaternary structure, homodimer. Post-translationally, rapidly phosphorylated by CK2 following Zn(2+) treatment. This phosphorylation is required for efficient cytosolic Zn(2+) release. Methylation at some His residue by METTL9 leads to reduced zinc-binding. Widely expressed.

The protein localises to the endoplasmic reticulum membrane. It is found in the golgi apparatus. It localises to the cis-Golgi network membrane. It carries out the reaction Zn(2+)(in) = Zn(2+)(out). Phosphorylation activates zinc transport activity. Its function is as follows. Transports Zn(2+) from the endoplasmic reticulum (ER)/Golgi apparatus to the cytosol, playing an essential role in the regulation of cytosolic zinc levels. Acts as a gatekeeper of zinc release from intracellular stores, requiring post-translational activation by phosphorylation, resulting in activation of multiple downstream pathways leading to cell growth and proliferation. Has an essential role in B cell development and is required for proper B cell receptor signaling. Plays an important role in maintaining intestinal epithelial homeostasis and skin dermis development by regulating ER function. Controls cell signaling pathways involved in glucose metabolism in skeletal muscle. Has a protective role against ER stress in different biological contexts. Mediates Zn(2+)-induced ferroptosis. The polypeptide is Zinc transporter SLC39A7 (SLC39A7) (Homo sapiens (Human)).